The sequence spans 138 residues: Large ribosomal subunit protein uL16 (138 aa).

The segment covering 1-21 (MLIPRKVKHRKQHHPSLRGRA) has biased composition (basic residues). Residues 1–22 (MLIPRKVKHRKQHHPSLRGRAK) form a disordered region.

The protein belongs to the universal ribosomal protein uL16 family. In terms of assembly, part of the 50S ribosomal subunit.

In terms of biological role, binds 23S rRNA and is also seen to make contacts with the A and possibly P site tRNAs. The protein is Large ribosomal subunit protein uL16 of Thermobifida fusca (strain YX).